The following is a 176-amino-acid chain: Shikimate kinase (176 aa).

14-19 (GAGKSS) contacts ATP. S18 contacts Mg(2+). The substrate site is built by D36, R60, and G82. Residue R120 participates in ATP binding. R138 contacts substrate.

It belongs to the shikimate kinase family. As to quaternary structure, monomer. Requires Mg(2+) as cofactor.

Its subcellular location is the cytoplasm. The enzyme catalyses shikimate + ATP = 3-phosphoshikimate + ADP + H(+). It functions in the pathway metabolic intermediate biosynthesis; chorismate biosynthesis; chorismate from D-erythrose 4-phosphate and phosphoenolpyruvate: step 5/7. Catalyzes the specific phosphorylation of the 3-hydroxyl group of shikimic acid using ATP as a cosubstrate. The protein is Shikimate kinase of Dehalococcoides mccartyi (strain ATCC BAA-2100 / JCM 16839 / KCTC 5957 / BAV1).